A 363-amino-acid chain; its full sequence is tRNA N6-adenosine threonylcarbamoyltransferase (363 aa).

2 residues coordinate Fe cation: His121 and His125. Residues 143–147, Asp176, Gly189, and Asn287 contribute to the substrate site; that span reads LASGG. A Fe cation-binding site is contributed by Asp315.

This sequence belongs to the KAE1 / TsaD family. The cofactor is Fe(2+).

Its subcellular location is the cytoplasm. It catalyses the reaction L-threonylcarbamoyladenylate + adenosine(37) in tRNA = N(6)-L-threonylcarbamoyladenosine(37) in tRNA + AMP + H(+). Functionally, required for the formation of a threonylcarbamoyl group on adenosine at position 37 (t(6)A37) in tRNAs that read codons beginning with adenine. Is involved in the transfer of the threonylcarbamoyl moiety of threonylcarbamoyl-AMP (TC-AMP) to the N6 group of A37, together with TsaE and TsaB. TsaD likely plays a direct catalytic role in this reaction. The chain is tRNA N6-adenosine threonylcarbamoyltransferase from Rhodopseudomonas palustris (strain BisB5).